Here is a 118-residue protein sequence, read N- to C-terminus: Small ribosomal subunit protein uS13 (118 aa).

Positions 94–118 are disordered; the sequence is SLPLRGQRTKTNARTRKGPRKPIKK.

The protein belongs to the universal ribosomal protein uS13 family. Part of the 30S ribosomal subunit. Forms a loose heterodimer with protein S19. Forms two bridges to the 50S subunit in the 70S ribosome.

In terms of biological role, located at the top of the head of the 30S subunit, it contacts several helices of the 16S rRNA. In the 70S ribosome it contacts the 23S rRNA (bridge B1a) and protein L5 of the 50S subunit (bridge B1b), connecting the 2 subunits; these bridges are implicated in subunit movement. Contacts the tRNAs in the A and P-sites. The protein is Small ribosomal subunit protein uS13 of Alteromonas mediterranea (strain DSM 17117 / CIP 110805 / LMG 28347 / Deep ecotype).